Consider the following 443-residue polypeptide: Xaa-Pro dipeptidase (443 aa).

Residues D246, D257, H339, E384, and E423 each coordinate Mn(2+).

Belongs to the peptidase M24B family. Bacterial-type prolidase subfamily. The cofactor is Mn(2+).

The catalysed reaction is Xaa-L-Pro dipeptide + H2O = an L-alpha-amino acid + L-proline. Splits dipeptides with a prolyl residue in the C-terminal position. The sequence is that of Xaa-Pro dipeptidase from Escherichia coli O8 (strain IAI1).